The chain runs to 68 residues: Large ribosomal subunit protein bL31 (68 aa).

4 residues coordinate Zn(2+): cysteine 16, cysteine 18, cysteine 38, and cysteine 41.

The protein belongs to the bacterial ribosomal protein bL31 family. Type A subfamily. As to quaternary structure, part of the 50S ribosomal subunit. Requires Zn(2+) as cofactor.

In terms of biological role, binds the 23S rRNA. The polypeptide is Large ribosomal subunit protein bL31 (Thiobacillus denitrificans (strain ATCC 25259 / T1)).